The chain runs to 478 residues: BTB/POZ domain-containing protein 17 (478 aa).

The signal sequence occupies residues methionine 1 to alanine 28. Residues asparagine 61, asparagine 100, and asparagine 195 are each glycosylated (N-linked (GlcNAc...) asparagine). The BTB domain occupies serine 63–leucine 132. The 101-residue stretch at alanine 169–glutamine 269 folds into the BACK domain.

The protein localises to the secreted. The chain is BTB/POZ domain-containing protein 17 (BTBD17) from Homo sapiens (Human).